A 549-amino-acid chain; its full sequence is Mitochondrial hydroperoxide bicyclase CYP50918A1 (549 aa).

The interval 1–75 is disordered; that stretch reads MPDAFDVSDD…PQGNRKPAVL (75 aa). Basic and acidic residues predominate over residues 8-26; it reads SDDKQLVDQQLTRDSDSKP. Residues 27–41 show a composition bias toward low complexity; that stretch reads AAKPASKQKPPSKVP. Cysteine 491 serves as a coordination point for heme. The segment at 528 to 549 is disordered; sequence DTGDHGPPNGKFSVIKPRQPKH.

Belongs to the cytochrome P450 family. Heme serves as cofactor.

It is found in the mitochondrion. The catalysed reaction is (13S)-hydroperoxy-(9Z,11E,15Z)-octadecatrienoate = plasmodiophorol A. It catalyses the reaction (13S)-hydroperoxy-(9Z,11E,15Z)-octadecatrienoate = plasmodiophorol B. It functions in the pathway lipid metabolism; oxylipin biosynthesis. Functionally, cytochrome P450 hydroperoxide bicyclase involved in the metabolism of oxylipins natural products such as egregiachlorides, hybridalactone, ecklonialactones and related bicyclic oxylipins. Isomerizes the hydroperoxides into epoxyalcohols via epoxyallylic radical. Can use alpha-linolenic 13-hydroperoxide ((9Z,11E,13S,15Z)-13-hydroperoxy-9,11,15-octadecatrienoic, 13-HPOT) as preferred substrate to produce the heterobicyclic oxylipins plasmodiophorol A (6-oxabicyclo[3.1.0]hexane) and plasmodiophorol B (2-oxabicyclo[2.2.1]heptane) at the ratio 12:1 and a minor product plasmodiophorol C (cyclopentanediol) formed through the hydrolysis of plasmodiophorols A and B and, to a lower extent, active with linoleic acid 13-hydroperoxide ((9Z,11E,13S)-13-hydroperoxy-9,11-octadecadienoic, 13-HPOD), linoleic acid 9-hydroperoxide ((9S,10E,12Z)-9-hydroperoxy-10,12-octadecadienoic, 9-HPOD) and alpha-linolenic 9-hydroperoxide ((9S,10E,12Z,15Z)-9-hydroperoxy-10,12,15-octadecatrienoic, 9-HPOT). This Plasmodiophora brassicae (Clubroot disease agent) protein is Mitochondrial hydroperoxide bicyclase CYP50918A1.